A 426-amino-acid chain; its full sequence is D-amino acid dehydrogenase (426 aa).

Residue 3 to 17 (VVVLGAGVIGVTTAW) coordinates FAD.

Belongs to the DadA oxidoreductase family. The cofactor is FAD.

The enzyme catalyses a D-alpha-amino acid + A + H2O = a 2-oxocarboxylate + AH2 + NH4(+). The protein operates within amino-acid degradation; D-alanine degradation; NH(3) and pyruvate from D-alanine: step 1/1. Functionally, oxidative deamination of D-amino acids. The chain is D-amino acid dehydrogenase from Phenylobacterium zucineum (strain HLK1).